The following is a 663-amino-acid chain: DNA topoisomerase 4 subunit B (663 aa).

ATP contacts are provided by residues Y7, N47, D74, 114–120, and K341; that span reads GLHGVGA. Positions 386 to 416 are disordered; the sequence is REAARKAREDARSGKKNKRKDTLLSGKLTPA. Residues 387–398 are compositionally biased toward basic and acidic residues; it reads EAARKAREDARS. In terms of domain architecture, Toprim spans 424 to 538; sequence NELYLVEGDS…ADRVFIALPP (115 aa). Positions 430, 503, and 505 each coordinate Mg(2+).

The protein belongs to the type II topoisomerase family. ParE type 2 subfamily. In terms of assembly, heterotetramer composed of ParC and ParE. Mg(2+) is required as a cofactor. Requires Mn(2+) as cofactor. Ca(2+) serves as cofactor.

The enzyme catalyses ATP-dependent breakage, passage and rejoining of double-stranded DNA.. Functionally, topoisomerase IV is essential for chromosome segregation. It relaxes supercoiled DNA. Performs the decatenation events required during the replication of a circular DNA molecule. The protein is DNA topoisomerase 4 subunit B of Staphylococcus aureus (strain MSSA476).